A 447-amino-acid polypeptide reads, in one-letter code: Putative branched-chain amino acid carrier protein SAB1263c (447 aa).

The next 12 membrane-spanning stretches (helical) occupy residues 6–26 (WVIG…IFPP), 40–60 (ILAF…VGAL), 74–94 (PKFS…LFAI), 114–134 (SSIA…YICL), 143–163 (IGSL…IKGY), 193–213 (GYLT…VNAV), 229–249 (LTAG…LGYI), 290–310 (LLGI…IGAV), 326–346 (FVLV…NAVI), 350–370 (IPVL…ILIA), 382–402 (IPVI…LGWL), and 417–437 (LEWF…GIFV).

This sequence belongs to the branched chain amino acid transporter family.

Its subcellular location is the cell membrane. Its function is as follows. Component of the transport system for branched-chain amino acids (leucine, isoleucine and valine), which is coupled to a proton motive force (Potential). Contributes to NaCl tolerance. The chain is Putative branched-chain amino acid carrier protein SAB1263c from Staphylococcus aureus (strain bovine RF122 / ET3-1).